The primary structure comprises 524 residues: Excitatory amino acid transporter 3 (524 aa).

At 1-18 (MGKPARKGCDWKRFLRNN) the chain is on the cytoplasmic side. Residues 19–38 (WLLLSTVVAVVLGIVIGVLV) traverse the membrane as a helical segment. At 39–61 (REYSKLSNLEKFYFSFPGEILMR) the chain is on the extracellular side. The helical transmembrane segment at 62–82 (MLKLVILPLIVSSMITGVATL) threads the bilayer. Residues 83–93 (DSNVSGKIGLR) are Cytoplasmic-facing. Residues 94–114 (AVVYYFCTTLIAVILGIVLVV) traverse the membrane as a helical segment. Residues Tyr-98, Thr-101, and Thr-102 each coordinate Na(+). Residues 115-205 (SIKPGVTQKV…KTKEYKVVGM (91 aa)) lie on the Extracellular side of the membrane. Residues Asn-178 and Asn-195 are each glycosylated (N-linked (GlcNAc...) asparagine). The chain crosses the membrane as a helical span at residues 206–229 (YSDGINVLGLIVFCLVLGIVIGRK). Over 230 to 238 (WEKGQILVD) the chain is Cytoplasmic. A helical transmembrane segment spans residues 239–266 (FFNALSDATMKIVQIIMCYMPIGILFLI). Topologically, residues 267 to 286 (AGKIIEVEDWEIFRKLGLYM) are extracellular. Residues 287-308 (ATVLSGLAIHSIVILPLIYFII) traverse the membrane as a helical segment. Residues 309 to 313 (VRKNP) lie on the Cytoplasmic side of the membrane. Residues 314–344 (FQFAMGMAQALLTALMISSSSATLPVTFRCA) constitute an intramembrane region (discontinuously helical). L-aspartate is bound by residues Ser-331 and Ser-333. Over 345-353 (EEKNRVDKR) the chain is Cytoplasmic. The chain crosses the membrane as a helical span at residues 354-380 (ITRFVLPVGATINMDGTALYEAVAAVF). Residues Gly-362, Thr-364, Asn-366, and Asp-368 each coordinate Na(+). Residue Thr-370 participates in L-aspartate binding. At 381–393 (IAQLNDLDLSVGQ) the chain is on the extracellular side. Positions 394-427 (IITISVTATAASIGAAGVPQPGLVTMVIVLSAVG) form an intramembrane region, discontinuously helical. Residues Ser-405, Ile-406, and Ala-408 each coordinate Na(+). Position 411 (Val-411) interacts with L-aspartate. Residues 428-440 (LPAEDVTLIIAVD) are Extracellular-facing. Residues 441-462 (WLLDRFRTMVNVLGDAFGTGIV) traverse the membrane as a helical segment. Residues Arg-447, Thr-448, and Asn-451 each contribute to the L-aspartate site. Asn-451 and Asp-455 together coordinate Na(+). The Cytoplasmic segment spans residues 463–524 (EKLSKKELEQ…TISFTQTSQF (62 aa)). 2 positions are modified to phosphoserine: Ser-517 and Ser-522.

Belongs to the dicarboxylate/amino acid:cation symporter (DAACS) (TC 2.A.23) family. SLC1A1 subfamily. Homotrimer. Interacts with ARL6IP5. Interacts with RTN2 (via N-terminus); the interaction promotes cell surface expression of SLC1A1. Interacts with SORCS2; this interaction is important for normal expression at the cell membrane.

It is found in the cell membrane. It localises to the apical cell membrane. Its subcellular location is the synapse. The protein resides in the synaptosome. The protein localises to the early endosome membrane. It is found in the late endosome membrane. It localises to the recycling endosome membrane. The enzyme catalyses K(+)(in) + L-glutamate(out) + 3 Na(+)(out) + H(+)(out) = K(+)(out) + L-glutamate(in) + 3 Na(+)(in) + H(+)(in). The catalysed reaction is K(+)(in) + L-aspartate(out) + 3 Na(+)(out) + H(+)(out) = K(+)(out) + L-aspartate(in) + 3 Na(+)(in) + H(+)(in). It carries out the reaction D-aspartate(out) + K(+)(in) + 3 Na(+)(out) + H(+)(out) = D-aspartate(in) + K(+)(out) + 3 Na(+)(in) + H(+)(in). It catalyses the reaction K(+)(in) + L-cysteine(out) + 3 Na(+)(out) + H(+)(out) = K(+)(out) + L-cysteine(in) + 3 Na(+)(in) + H(+)(in). Its function is as follows. Sodium-dependent, high-affinity amino acid transporter that mediates the uptake of L-glutamate and also L-aspartate and D-aspartate. Can also transport L-cysteine. Functions as a symporter that transports one amino acid molecule together with two or three Na(+) ions and one proton, in parallel with the counter-transport of one K(+) ion. Mediates Cl(-) flux that is not coupled to amino acid transport; this avoids the accumulation of negative charges due to aspartate and Na(+) symport. Plays an important role in L-glutamate and L-aspartate reabsorption in renal tubuli. Plays a redundant role in the rapid removal of released glutamate from the synaptic cleft, which is essential for terminating the postsynaptic action of glutamate. Contributes to glutathione biosynthesis and protection against oxidative stress via its role in L-glutamate and L-cysteine transport. Negatively regulated by ARL6IP5. The protein is Excitatory amino acid transporter 3 (SLC1A1) of Bos taurus (Bovine).